The primary structure comprises 534 residues: Peptide chain release factor 3 (534 aa).

Positions 9 to 278 (ARRRTFAIIS…FFVEHAPPPQ (270 aa)) constitute a tr-type G domain. GTP is bound by residues 18-25 (SHPDAGKT), 86-90 (DTPGH), and 140-143 (NKLD).

It belongs to the TRAFAC class translation factor GTPase superfamily. Classic translation factor GTPase family. PrfC subfamily.

It localises to the cytoplasm. Increases the formation of ribosomal termination complexes and stimulates activities of RF-1 and RF-2. It binds guanine nucleotides and has strong preference for UGA stop codons. It may interact directly with the ribosome. The stimulation of RF-1 and RF-2 is significantly reduced by GTP and GDP, but not by GMP. This is Peptide chain release factor 3 from Xanthomonas axonopodis pv. citri (strain 306).